The sequence spans 482 residues: tRNA sulfurtransferase (482 aa).

The region spanning 61–165 is the THUMP domain; it reads LTIRDALTRI…DDRLLLIKGR (105 aa). ATP is bound by residues 183–184, K265, G287, and Q296; that span reads LI. C344 and C456 are joined by a disulfide. One can recognise a Rhodanese domain in the interval 404–482; sequence FGPNDVILDI…GFNNVKVYRP (79 aa). C456 serves as the catalytic Cysteine persulfide intermediate.

It belongs to the ThiI family.

The protein resides in the cytoplasm. The catalysed reaction is [ThiI sulfur-carrier protein]-S-sulfanyl-L-cysteine + a uridine in tRNA + 2 reduced [2Fe-2S]-[ferredoxin] + ATP + H(+) = [ThiI sulfur-carrier protein]-L-cysteine + a 4-thiouridine in tRNA + 2 oxidized [2Fe-2S]-[ferredoxin] + AMP + diphosphate. The enzyme catalyses [ThiS sulfur-carrier protein]-C-terminal Gly-Gly-AMP + S-sulfanyl-L-cysteinyl-[cysteine desulfurase] + AH2 = [ThiS sulfur-carrier protein]-C-terminal-Gly-aminoethanethioate + L-cysteinyl-[cysteine desulfurase] + A + AMP + 2 H(+). It functions in the pathway cofactor biosynthesis; thiamine diphosphate biosynthesis. Functionally, catalyzes the ATP-dependent transfer of a sulfur to tRNA to produce 4-thiouridine in position 8 of tRNAs, which functions as a near-UV photosensor. Also catalyzes the transfer of sulfur to the sulfur carrier protein ThiS, forming ThiS-thiocarboxylate. This is a step in the synthesis of thiazole, in the thiamine biosynthesis pathway. The sulfur is donated as persulfide by IscS. The chain is tRNA sulfurtransferase from Shigella flexneri.